The primary structure comprises 514 residues: NAD(P)H-quinone oxidoreductase subunit 2 (514 aa).

The next 14 helical transmembrane spans lie at 16–36 (IWPEGIIIITLMVILIGDLIV), 43–63 (WLPYVAIAGLLAAVVALYFEW), 80–100 (LSIVFRAIVALSTTVTILMSV), 110–130 (LAEFIAIMLTATLGGMFLSGA), 133–153 (LVMIFISLEMLSISSYLMTGY), 168–188 (LLIGASSSAIFLYGVSLLYGL), 211–231 (LGLAIALVFVIAGIAFKISAV), 245–265 (PTPVVAFLSVGSKAAGFALAI), 279–299 (WHFIFTALAILSMVLGNVVAL), 307–327 (MLAYSSIGQAGFVMIGLTANS), 335–355 (IFYLLIYLFMNLGAFICIILF), 379–399 (LGLSICLLSLGGIPPLAGFFG), 411–431 (GLYGLVLLGLVTSVISIYYYI), and 467–487 (VGLVLSVIATSLAGILSNPLF).

Belongs to the complex I subunit 2 family. As to quaternary structure, NDH-1 can be composed of about 15 different subunits; different subcomplexes with different compositions have been identified which probably have different functions.

It is found in the cellular thylakoid membrane. The catalysed reaction is a plastoquinone + NADH + (n+1) H(+)(in) = a plastoquinol + NAD(+) + n H(+)(out). It catalyses the reaction a plastoquinone + NADPH + (n+1) H(+)(in) = a plastoquinol + NADP(+) + n H(+)(out). NDH-1 shuttles electrons from an unknown electron donor, via FMN and iron-sulfur (Fe-S) centers, to quinones in the respiratory and/or the photosynthetic chain. The immediate electron acceptor for the enzyme in this species is believed to be plastoquinone. Couples the redox reaction to proton translocation, and thus conserves the redox energy in a proton gradient. Cyanobacterial NDH-1 also plays a role in inorganic carbon-concentration. The protein is NAD(P)H-quinone oxidoreductase subunit 2 of Gloeothece citriformis (strain PCC 7424) (Cyanothece sp. (strain PCC 7424)).